Consider the following 168-residue polypeptide: Ribosome maturation factor RimP (168 aa).

Belongs to the RimP family.

It localises to the cytoplasm. In terms of biological role, required for maturation of 30S ribosomal subunits. This Mycoplasma mobile (strain ATCC 43663 / 163K / NCTC 11711) (Mesomycoplasma mobile) protein is Ribosome maturation factor RimP.